A 70-amino-acid chain; its full sequence is Large ribosomal subunit protein bL31 (70 aa).

4 residues coordinate Zn(2+): Cys16, Cys18, Cys37, and Cys40.

Belongs to the bacterial ribosomal protein bL31 family. Type A subfamily. As to quaternary structure, part of the 50S ribosomal subunit. The cofactor is Zn(2+).

In terms of biological role, binds the 23S rRNA. In Pasteurella multocida (strain Pm70), this protein is Large ribosomal subunit protein bL31.